The chain runs to 552 residues: uncharacterized protein (552 aa).

The disordered stretch occupies residues 1-59 (MPLEKTNTHDSTATVEDQEATDNPMHLTQSRMLDLAGNPNRTTSRQSETLFPNGVDLNY). Residues 39–50 (PNRTTSRQSETL) are compositionally biased toward polar residues. 12 helical membrane passes run 116–136 (ITIV…VIAG), 158–178 (LMVV…EMIG), 181–201 (IVYL…ALAP), 203–223 (IACL…PLTL), 238–258 (GLAI…GPLV), 271–291 (WIFW…LPVP), 345–365 (ILVC…GYFF), 383–403 (GLMF…TPFL), 424–444 (LVGM…FAWT), 450–470 (IWIG…LFYF), 484–506 (CASA…PLFI), and 519–539 (FFLL…FYLF).

It belongs to the major facilitator superfamily.

Its subcellular location is the membrane. This is an uncharacterized protein from Schizosaccharomyces pombe (strain 972 / ATCC 24843) (Fission yeast).